The following is a 429-amino-acid chain: Histidine--tRNA ligase (429 aa).

The protein belongs to the class-II aminoacyl-tRNA synthetase family. In terms of assembly, homodimer.

Its subcellular location is the cytoplasm. The enzyme catalyses tRNA(His) + L-histidine + ATP = L-histidyl-tRNA(His) + AMP + diphosphate + H(+). This chain is Histidine--tRNA ligase, found in Pseudomonas aeruginosa (strain UCBPP-PA14).